The sequence spans 567 residues: SRSF protein kinase 3 (567 aa).

A compositionally biased stretch (gly residues) spans 1-16 (MSASTGGGGDSGGSGG). Residues 1 to 36 (MSASTGGGGDSGGSGGSSSSSQASCGPESSGSELAL) form a disordered region. Residues 17 to 32 (SSSSSQASCGPESSGS) show a composition bias toward low complexity. A Phosphoserine modification is found at Ser-50. In terms of domain architecture, Protein kinase spans 79-565 (YHVVRKLGWG…AADCLQHPWL (487 aa)). ATP-binding positions include 85 to 93 (LGWGHFSTV) and Lys-108. The active-site Proton acceptor is the Asp-212. Disordered stretches follow at residues 238-283 (QQAG…RLLE) and 298-351 (ATQA…SQTS). A compositionally biased stretch (polar residues) spans 248–258 (SIVSTAPQEVL). Over residues 264–279 (SKNKRKKMRRKRKQQK) the composition is skewed to basic residues. Low complexity predominate over residues 327 to 348 (AGPSPASSSPAPGGGRSLSAGS). Ser-330 carries the phosphoserine modification.

The protein belongs to the protein kinase superfamily. CMGC Ser/Thr protein kinase family. As to expression, expressed in skeletal and heart muscle. Also expressed in the fetal brain.

The protein localises to the nucleus. Its subcellular location is the cytoplasm. The catalysed reaction is L-seryl-[protein] + ATP = O-phospho-L-seryl-[protein] + ADP + H(+). It carries out the reaction L-threonyl-[protein] + ATP = O-phospho-L-threonyl-[protein] + ADP + H(+). Its function is as follows. Serine/arginine-rich protein-specific kinase which specifically phosphorylates its substrates at serine residues located in regions rich in arginine/serine dipeptides, known as RS domains. Phosphorylates the SR splicing factor SRSF1 and the lamin-B receptor (LBR) in vitro. Required for normal muscle development. The protein is SRSF protein kinase 3 (SRPK3) of Homo sapiens (Human).